A 77-amino-acid polypeptide reads, in one-letter code: Integrin beta-2 (77 aa).

C36 and C43 are disulfide-bonded. A glycan (N-linked (GlcNAc...) asparagine) is linked at N54.

The protein belongs to the integrin beta chain family. In terms of assembly, dimer of an alpha and beta subunit.

It is found in the membrane. Integrins are a large family of cell surface glycoproteins that mediate cell to cell and cell to matrix adhesion. This is Integrin beta-2 (itgb2) from Xenopus laevis (African clawed frog).